The chain runs to 492 residues: Glutamyl-tRNA(Gln) amidotransferase subunit A (492 aa).

Catalysis depends on charge relay system residues Lys-81 and Ser-156. Catalysis depends on Ser-180, which acts as the Acyl-ester intermediate.

The protein belongs to the amidase family. GatA subfamily. In terms of assembly, heterotrimer of A, B and C subunits.

The catalysed reaction is L-glutamyl-tRNA(Gln) + L-glutamine + ATP + H2O = L-glutaminyl-tRNA(Gln) + L-glutamate + ADP + phosphate + H(+). Functionally, allows the formation of correctly charged Gln-tRNA(Gln) through the transamidation of misacylated Glu-tRNA(Gln) in organisms which lack glutaminyl-tRNA synthetase. The reaction takes place in the presence of glutamine and ATP through an activated gamma-phospho-Glu-tRNA(Gln). This chain is Glutamyl-tRNA(Gln) amidotransferase subunit A, found in Rhodococcus erythropolis (strain PR4 / NBRC 100887).